The chain runs to 72 residues: Protein SlyX (72 aa).

Belongs to the SlyX family.

The sequence is that of Protein SlyX from Cronobacter sakazakii (strain ATCC BAA-894) (Enterobacter sakazakii).